We begin with the raw amino-acid sequence, 137 residues long: Large ribosomal subunit protein uL16 (137 aa).

It belongs to the universal ribosomal protein uL16 family. In terms of assembly, part of the 50S ribosomal subunit.

Its function is as follows. Binds 23S rRNA and is also seen to make contacts with the A and possibly P site tRNAs. The protein is Large ribosomal subunit protein uL16 of Oleidesulfovibrio alaskensis (strain ATCC BAA-1058 / DSM 17464 / G20) (Desulfovibrio alaskensis).